The chain runs to 513 residues: Protein PNS1 (513 aa).

The segment covering 1–13 (MSNNNYPPPPNPP) has biased composition (pro residues). The interval 1–41 (MSNNNYPPPPNPPNYQGEEQVHNVQPDLENNQEKYYAEQPQ) is disordered. The Cytoplasmic portion of the chain corresponds to 1–60 (MSNNNYPPPPNPPNYQGEEQVHNVQPDLENNQEKYYAEQPQPSQQFEESFKIDKPKWNDW). The helical transmembrane segment at 61 to 81 (PFTVFFLLTVAGFIAIAGITL) threads the bilayer. Residues 82–108 (NALKKTYGLQGSSIYNSTDTFTLNTNT) lie on the Extracellular side of the membrane. Asn97 carries N-linked (GlcNAc...) asparagine glycosylation. The chain crosses the membrane as a helical span at residues 109-129 (IILFGFIIVVGVVLSVLIIVY). At 130–136 (ARMAPRV) the chain is on the cytoplasmic side. Residues 137-157 (FITTGLILNIILGLGTCIYYF) form a helical membrane-spanning segment. Topologically, residues 158–163 (VAHYYS) are extracellular. Residues 164–182 (AAIVFLVFTLFTAWCYWSC) form a helical membrane-spanning segment. Topologically, residues 183–210 (RHRIPFSATVLEITIDVMKRYPSTLITS) are cytoplasmic. The helical transmembrane segment at 211-231 (FIGIIVSGLFSTLFSVVIVAT) threads the bilayer. At 232-251 (YVKYDPDSQGCDVAGGGCSQ) the chain is on the extracellular side. Residues 252–272 (SKLIGVLVFVFFAGYYISEVI) traverse the membrane as a helical segment. Residues 273-309 (KNVIHITIAGIYGTWYYLSNSDQGEPKHPALGAFKRA) lie on the Cytoplasmic side of the membrane. The chain crosses the membrane as a helical span at residues 310–330 (MTYCFGSVCFGSLIVSIIQLI). Topologically, residues 331 to 346 (RSFVQILKQNAFGSGD) are extracellular. Residues 347–367 (NCAGCGFLILDFVLGFIDWIV) traverse the membrane as a helical segment. Topologically, residues 368-412 (RYFNHYAYCYVALYGKSYLKSARDTFDLIRFKGMDALINDCFINT) are cytoplasmic. A helical transmembrane segment spans residues 413–433 (SLNLYSMFVGYVVALLAYFYL). The Extracellular segment spans residues 434–460 (KFTDPAYNSSGTFYAPVVAFSFLISGQ). A glycan (N-linked (GlcNAc...) asparagine) is linked at Asn441. A helical membrane pass occupies residues 461-481 (ITRIALTVISSGISTFFVALA). Residues 482-513 (KDPEVFQMTNRDRFDEIFRNYPQVLQKITSDH) lie on the Cytoplasmic side of the membrane.

This sequence belongs to the CTL (choline transporter-like) family.

It is found in the cell membrane. Functionally, probably involved in transport through the plasma membrane. In Debaryomyces hansenii (strain ATCC 36239 / CBS 767 / BCRC 21394 / JCM 1990 / NBRC 0083 / IGC 2968) (Yeast), this protein is Protein PNS1 (PNS1).